Consider the following 300-residue polypeptide: Ribosomal RNA small subunit methyltransferase H (300 aa).

Residues 46–48 (GGH), D65, F92, D107, and Q114 each bind S-adenosyl-L-methionine.

It belongs to the methyltransferase superfamily. RsmH family.

The protein resides in the cytoplasm. The enzyme catalyses cytidine(1402) in 16S rRNA + S-adenosyl-L-methionine = N(4)-methylcytidine(1402) in 16S rRNA + S-adenosyl-L-homocysteine + H(+). Functionally, specifically methylates the N4 position of cytidine in position 1402 (C1402) of 16S rRNA. The chain is Ribosomal RNA small subunit methyltransferase H from Prochlorococcus marinus (strain MIT 9215).